Reading from the N-terminus, the 667-residue chain is Probable potassium transport system protein Kup (667 aa).

The next 12 membrane-spanning stretches (helical) occupy residues 16-36 (GFIIALGIVYGDIGTSPLYTM), 58-78 (VSLIIWTLTLVTTIKYVLIAL), 101-121 (WLIIPAMLGGATLLSDGALTP), 146-166 (TNVILTTLLILMVLFGLQRFG), 167-187 (TGVIGKLFGPVMLVWFSVLGI), 221-241 (IFILGSIFLATTGAEALYSDL), 253-273 (WPFVKVCIILSYCGQAAWILA), 294-314 (VYLVILATLAAIIASQALISG), 343-363 (LYIPVINWSLFAVTSCTVLYF), 373-393 (YGLAITITMLMTTILLAYYLI), 399-419 (PLLASLLMAFFAFIEFIFFLA), and 431-451 (VVVLALAIVFVMVIWHAGTVI).

It belongs to the HAK/KUP transporter (TC 2.A.72) family.

It is found in the cell membrane. It catalyses the reaction K(+)(in) + H(+)(in) = K(+)(out) + H(+)(out). Functionally, transport of potassium into the cell. Likely operates as a K(+):H(+) symporter. The chain is Probable potassium transport system protein Kup from Streptococcus equi subsp. zooepidemicus (strain H70).